Consider the following 329-residue polypeptide: Prostaglandin reductase 1 (329 aa).

A Phosphothreonine modification is found at Thr18. Ser20 carries the phosphoserine modification. NADP(+) is bound by residues 152–155 (GAVG), Lys178, Tyr193, Asn217, 239–245 (CGAISVY), 270–272 (FVV), and Asn321. Position 178 is an N6-(2-hydroxyisobutyryl)lysine; alternate (Lys178). Lys178 is subject to N6-acetyllysine; alternate.

This sequence belongs to the NADP-dependent oxidoreductase L4BD family. Monomer or homodimer.

It is found in the cytoplasm. The enzyme catalyses 13,14-dihydro-15-oxo-prostaglandin E1 + NADP(+) = 15-oxoprostaglandin E1 + NADPH + H(+). The catalysed reaction is 13,14-dihydro-15-oxo-prostaglandin E2 + NADP(+) = 15-oxoprostaglandin E2 + NADPH + H(+). It catalyses the reaction 13,14-dihydro-15-oxo-prostaglandin F1alpha + NADP(+) = 15-oxoprostaglandin F1alpha + NADPH + H(+). It carries out the reaction 13,14-dihydro-15-oxo-PGF2alpha + NADP(+) = 15-oxoprostaglandin F2alpha + NADPH + H(+). The enzyme catalyses leukotriene B4 + NADP(+) = 12-oxo-leukotriene B4 + NADPH + H(+). The catalysed reaction is 20-hydroxy-leukotriene B4 + NADP(+) = 12-oxo-20-hydroxy-leukotriene B4 + NADPH + H(+). It catalyses the reaction 6-trans-leukotriene B4 + NADP(+) = 12-oxo-(5S)-hydroxy-(6E,8E,10E,14Z)-eicosatetraenoate + NADPH + H(+). It carries out the reaction (5S,12S)-dihydroxy-(6E,10E,12E,14Z)-eicosatetraenoate + NADP(+) = 12-oxo-(5S)-hydroxy-(6E,8E,10E,14Z)-eicosatetraenoate + NADPH + H(+). The enzyme catalyses an n-alkanal + NADP(+) = an alk-2-enal + NADPH + H(+). The catalysed reaction is hexanal + NADP(+) = (E)-hex-2-enal + NADPH + H(+). It catalyses the reaction octanal + NADP(+) = (2E)-octenal + NADPH + H(+). It carries out the reaction decanal + NADP(+) = (2E)-decenal + NADPH + H(+). The enzyme catalyses dodecanal + NADP(+) = (2E)-dodecenal + NADPH + H(+). The catalysed reaction is 4-hydroxynonanal + NADP(+) = (E)-4-hydroxynon-2-enal + NADPH + H(+). It catalyses the reaction pentan-2-one + NADP(+) = (E)-pent-3-en-2-one + NADPH + H(+). It carries out the reaction nonan-2-one + NADP(+) = (3E)-nonen-2-one + NADPH + H(+). Its function is as follows. NAD(P)H-dependent oxidoreductase involved in metabolic inactivation of pro- and anti-inflammatory eicosanoids: prostaglandins (PG), leukotrienes (LT) and lipoxins (LX). Catalyzes with high efficiency the reduction of the 13,14 double bond of 15-oxoPGs, including 15-oxo-PGE1, 15-oxo-PGE2, 15-oxo-PGF1-alpha and 15-oxo-PGF2-alpha. Catalyzes with lower efficiency the oxidation of the hydroxyl group at C12 of LTB4 and its derivatives, converting them into biologically less active 12-oxo-LTB4 metabolites. Reduces 15-oxo-LXA4 to 13,14 dihydro-15-oxo-LXA4, enhancing neutrophil recruitment at the inflammatory site. Plays a role in metabolic detoxification of alkenals and ketones. Reduces alpha,beta-unsaturated alkenals and ketones, particularly those with medium-chain length, showing highest affinity toward (2E)-decenal and (3E)-3-nonen-2-one. May inactivate 4-hydroxy-2-nonenal, a cytotoxic lipid constituent of oxidized low-density lipoprotein particles. The protein is Prostaglandin reductase 1 (PTGR1) of Bos taurus (Bovine).